The primary structure comprises 91 residues: Peptide Ctry2146 (91 aa).

An N-terminal signal peptide occupies residues 1 to 23; it reads MKTQTLLVTFLVVLLMVATQTEA. Leucine 33 bears the Leucine amide mark. Positions 37–91 are excised as a propeptide; that stretch reads GLLDGLLGKRGLLFGKRGPLFGKRALTNQDFLDFAYDPSLSAADMDALEMLFEDY.

Belongs to the non-disulfide-bridged peptide (NDBP) superfamily. Short antimicrobial peptide (group 4) family. Expressed by the venom gland.

It is found in the secreted. The protein resides in the target cell membrane. Its function is as follows. Antimicrobial peptide. This Chaerilus tryznai (Scorpion) protein is Peptide Ctry2146.